The chain runs to 1103 residues: Voltage-dependent calcium channel subunit alpha-2/delta-1 (1103 aa).

An N-terminal signal peptide occupies residues 1-24; that stretch reads MAAGCLLALTLTLFQSGLIGPSSE. Topologically, residues 25 to 1073 are extracellular; that stretch reads EPFPSPVTIK…VLEDYTDCGG (1049 aa). A glycan (N-linked (GlcNAc...) asparagine) is linked at N92. At S119 the chain carries Phosphoserine. Residues N136 and N184 are each glycosylated (N-linked (GlcNAc...) asparagine). In terms of domain architecture, VWFA spans 253–430; the sequence is DMLILVDVSG…INTQEYLDVL (178 aa). A divalent metal cation-binding residues include D259, S261, and S263. The MIDAS-like motif signature appears at 259 to 263; the sequence is DVSGS. N-linked (GlcNAc...) asparagine glycans are attached at residues N324 and N348. C404 and C1059 are oxidised to a cystine. In terms of domain architecture, Cache spans 446–537; sequence WTNVYLDALE…QPKPIGVGIP (92 aa). N-linked (GlcNAc...) asparagine glycans are attached at residues N613, N781, and N888. A helical membrane pass occupies residues 1074–1094; it reads VSGLNPSLWSIFGLQFILLWL. The Cytoplasmic segment spans residues 1095 to 1103; it reads VSGSRHYLL.

Belongs to the calcium channel subunit alpha-2/delta family. In terms of assembly, dimer formed of alpha-2-1 and delta-1 chains; disulfide-linked. Voltage-dependent calcium channels are multisubunit complexes, consisting of alpha-1 (CACNA1), alpha-2 (CACNA2D), beta (CACNB) and delta (CACNA2D) subunits in a 1:1:1:1 ratio. Proteolytically processed into subunits alpha-2-1 and delta-1 that are disulfide-linked. Isoform 2A is expressed in skeletal muscle and aorta. Isoform 2B is expressed in brain. Isoform 2C is expressed in heart. Isoform 2D is expressed in heart and smooth muscle. Isoform 2E is expressed in smooth muscle. All five isoforms are expressed in the cardiovascular system.

The protein localises to the membrane. It is found in the cell membrane. Its function is as follows. The alpha-2/delta subunit of voltage-dependent calcium channels regulates calcium current density and activation/inactivation kinetics of the calcium channel. Plays an important role in excitation-contraction coupling. This Mus musculus (Mouse) protein is Voltage-dependent calcium channel subunit alpha-2/delta-1 (Cacna2d1).